The sequence spans 119 residues: Ribonuclease P protein component (119 aa).

This sequence belongs to the RnpA family. As to quaternary structure, consists of a catalytic RNA component (M1 or rnpB) and a protein subunit.

The catalysed reaction is Endonucleolytic cleavage of RNA, removing 5'-extranucleotides from tRNA precursor.. In terms of biological role, RNaseP catalyzes the removal of the 5'-leader sequence from pre-tRNA to produce the mature 5'-terminus. It can also cleave other RNA substrates such as 4.5S RNA. The protein component plays an auxiliary but essential role in vivo by binding to the 5'-leader sequence and broadening the substrate specificity of the ribozyme. This is Ribonuclease P protein component from Yersinia enterocolitica serotype O:8 / biotype 1B (strain NCTC 13174 / 8081).